A 255-amino-acid chain; its full sequence is tRNA (guanine-N(1)-)-methyltransferase (255 aa).

Residues Gly113 and 133 to 138 contribute to the S-adenosyl-L-methionine site; that span reads IGDYVL.

This sequence belongs to the RNA methyltransferase TrmD family. In terms of assembly, homodimer.

It is found in the cytoplasm. It carries out the reaction guanosine(37) in tRNA + S-adenosyl-L-methionine = N(1)-methylguanosine(37) in tRNA + S-adenosyl-L-homocysteine + H(+). In terms of biological role, specifically methylates guanosine-37 in various tRNAs. The sequence is that of tRNA (guanine-N(1)-)-methyltransferase from Salmonella paratyphi A (strain ATCC 9150 / SARB42).